A 513-amino-acid chain; its full sequence is Gluconokinase (513 aa).

ATP-binding positions include lysine 16, threonine 261, glycine 300, and 412–416 (GFARS).

Belongs to the FGGY kinase family.

It catalyses the reaction D-gluconate + ATP = 6-phospho-D-gluconate + ADP + H(+). It participates in carbohydrate acid metabolism; D-gluconate degradation. Catabolite repression by gluconate. The sequence is that of Gluconokinase (gntK) from Bacillus licheniformis.